Consider the following 449-residue polypeptide: Baeyer-Villiger oxidase GME11358 (449 aa).

It belongs to the questin oxidase family.

It functions in the pathway secondary metabolite biosynthesis. Its function is as follows. Baeyer-Villiger oxidase; part of the gene cluster that mediates the biosynthesis of dibenzodioxocinones such as pestalotiollide B, a novel class of inhibitors against cholesterol ester transfer protein (CEPT). The biosynthesis initiates from condensation of acetate and malonate units catalyzed by the non-reducing PKS pks8/GME11356. Pks8/GME11356 lacks a thioesterase (TE) domain, which is important to the cyclizing of the third ring of atrochrysone carboxylic acid, and the esterase GME11355 might play the role of TE and catalyzes the cyclization reaction of the C ring. The lactamase-like protein GME11357 (or other beta-lactamases in Pestalotiopsis microspora) probably hydrolyzes the thioester bond between the ACP of pks8/GME11356 and the intermediate to release atrochrysone carboxylic acid, which is spontaneously dehydrates to form endocrocin anthrone. Endocrocin anthrone is further converted to emodin via the endocrocin intermediate. Emodin is then oxidized by several enzymes such as the Baeyer-Villiger oxidase GME11358, the oxidoreductase GME11367, the short chain dehydrogenase/reductase GME11373, as well as by other oxidoreductases from the cluster, to modify the A and C rings and open the B ring, and finally yield monodictyphenone. The prenyltransferase GME11375 may catalyze the addition reaction between the C5 side chains and the carbon bone of dibenzodioxocinones. The remaining biochemical reactions to the final product dibenzodioxocinones should be methylation catalyzed by methyltransferase GME11366 and reduction and lactonization reaction catalyzed by a series of oxidordeuctases. This Pestalotiopsis microspora protein is Baeyer-Villiger oxidase GME11358.